The following is a 439-amino-acid chain: DNA 3'-5' translocase XPB2 (439 aa).

The interval M1–V54 is DRD domain. The 145-residue stretch at V77–V221 folds into the Helicase ATP-binding domain. ATP-binding positions include L90–T97 and R127. The DEAH box motif lies at D174–H177. The RED motif motif lies at R205–D207. A flexible hinge region region spans residues E227 to I234. Residues N248 to N307 form a thM region region. One can recognise a Helicase C-terminal domain in the interval K311–E439.

The protein belongs to the helicase family. RAD25/XPB subfamily. In terms of assembly, forms a heterodimer with Bax1.

The catalysed reaction is Couples ATP hydrolysis with the unwinding of duplex DNA by translocating in the 3'-5' direction.. The enzyme catalyses ATP + H2O = ADP + phosphate + H(+). Its function is as follows. ATP-dependent DNA translocase which moves along double-stranded DNA (dsDNA) in a 3'-5' direction, unwinding the DNA. The ThM domain grips the resulting 3'-ssDNA tail and functions as a wedge (particularly Phe-278), breaking dsDNA base pairs, probably using the energy from ATP hydrolysis to move along dsDNA. A DNA-dependent ATPase; double-stranded DNA (dsDNA) stimulates the activity more than single-stranded DNA (ssDNA), while Bax1 stimulates ATPase more. In an in vitro assay had no detectable helicase activity. Binds ssDNA better than dsDNA. Has very low ATPase activity that is stimulated by Bax1; dsDNA, Y-form DNA and a DNA substrate with a 6 base pair (bp) bubble in the center stimulate the XPB2-Bax1 ATPase activity about 10- 20-fold more than the absence of DNA. In an XPB2-Bax1-bubble DNA crystal (12 bp of dsDNA, a 6 base bubble and 6 bp of dsDNA) the short 6 bp arm is unwound. The 2 helicase and the ThM domains of XPB2 with the NTD and CRD domains of Bax1 encircle the DNA, forming a tunnel where the 12 bp dsDNA and the ds-ssDNA junction are located. The ThM domain is wedged between the ssDNA tails, with the 5' ssDNA contacting Bax1 and the 3' ssDNA in a channel in XPB2. Bax1 increases the affinity of XPB2 for forked DNA. The sequence is that of DNA 3'-5' translocase XPB2 from Sulfurisphaera tokodaii (strain DSM 16993 / JCM 10545 / NBRC 100140 / 7) (Sulfolobus tokodaii).